Here is a 902-residue protein sequence, read N- to C-terminus: HTH-type transcriptional regulator MalT (902 aa).

An ATP-binding site is contributed by 39–46 (SPAGYGKT). The HTH luxR-type domain maps to 832-897 (ELVRTSPLTQ…EAIVTAENLL (66 aa)). A DNA-binding region (H-T-H motif) is located at residues 856-875 (NEQIAQELDVAGTTIKTHIR).

The protein belongs to the MalT family. Monomer in solution. Oligomerizes to an active state in the presence of the positive effectors ATP and maltotriose.

With respect to regulation, activated by ATP and maltotriose, which are both required for DNA binding. Positively regulates the transcription of the maltose regulon whose gene products are responsible for uptake and catabolism of malto-oligosaccharides. Specifically binds to the promoter region of its target genes, recognizing a short DNA motif called the MalT box. The chain is HTH-type transcriptional regulator MalT from Vibrio campbellii (strain ATCC BAA-1116).